A 195-amino-acid chain; its full sequence is Peptidyl-tRNA hydrolase (195 aa).

A tRNA-binding site is contributed by tyrosine 17. Histidine 22 serves as the catalytic Proton acceptor. Residues phenylalanine 68, asparagine 70, and asparagine 116 each coordinate tRNA.

Belongs to the PTH family. Monomer.

It localises to the cytoplasm. The catalysed reaction is an N-acyl-L-alpha-aminoacyl-tRNA + H2O = an N-acyl-L-amino acid + a tRNA + H(+). Its function is as follows. Hydrolyzes ribosome-free peptidyl-tRNAs (with 1 or more amino acids incorporated), which drop off the ribosome during protein synthesis, or as a result of ribosome stalling. Catalyzes the release of premature peptidyl moieties from peptidyl-tRNA molecules trapped in stalled 50S ribosomal subunits, and thus maintains levels of free tRNAs and 50S ribosomes. The sequence is that of Peptidyl-tRNA hydrolase from Shewanella amazonensis (strain ATCC BAA-1098 / SB2B).